A 290-amino-acid polypeptide reads, in one-letter code: Cbb3-type cytochrome c oxidase subunit FixP (290 aa).

The Cytoplasmic portion of the chain corresponds to 1–32 (MTDHSEFDSVSGKTTTGHEWDGIKELNTPLPR). A helical transmembrane segment spans residues 33–53 (WWVICFYLTIVWAIGYWIVYP). The Periplasmic portion of the chain corresponds to 54 to 290 (AWPLISSNTT…VYVHSLGGGK (237 aa)). Cytochrome c domains are found at residues 109–198 (LARA…RSLS) and 206–287 (YDAA…HSLG). Heme c-binding residues include Cys122, Cys125, His126, Met173, Cys219, Cys222, His223, and Met264.

Belongs to the CcoP / FixP family. Component of the cbb3-type cytochrome c oxidase at least composed of FixN, FixO, FixQ and FixP. It depends on heme c as a cofactor.

Its subcellular location is the cell inner membrane. Its pathway is energy metabolism; oxidative phosphorylation. In terms of biological role, C-type cytochrome. Part of the cbb3-type cytochrome c oxidase complex. FixP subunit is required for transferring electrons from donor cytochrome c via its heme groups to FixO subunit. From there, electrons are shuttled to the catalytic binuclear center of FixN subunit where oxygen reduction takes place. The complex also functions as a proton pump. The sequence is that of Cbb3-type cytochrome c oxidase subunit FixP from Bradyrhizobium diazoefficiens (strain JCM 10833 / BCRC 13528 / IAM 13628 / NBRC 14792 / USDA 110).